The chain runs to 235 residues: Putative cobalt transport protein CbiM 2 (235 aa).

7 helical membrane passes run 9–29, 41–61, 80–100, 107–127, 135–155, 160–180, and 181–201; these read PAGWCLVWWLIALPFLVMGII, YLPLLGVCGAFIFILSALKLP, FGYCVTAVVGAIVLLFQALLL, TMGANMVSMAIGGPIAGYAVY, INIYVTVFLASAVADIVTYII, LALAYPAQVGGFLASFSAFFS, and IFAITQIPLSIMEGVVLALVF.

The protein belongs to the CbiM family. As to quaternary structure, forms an energy-coupling factor (ECF) transporter complex composed of an ATP-binding protein (A component, CbiO), a transmembrane protein (T component, CbiQ) and 2 possible substrate-capture proteins (S components, CbiM and CbiN) of unknown stoichimetry.

It is found in the cell membrane. It functions in the pathway cofactor biosynthesis; adenosylcobalamin biosynthesis. In terms of biological role, part of the energy-coupling factor (ECF) transporter complex CbiMNOQ involved in cobalt import. This Methanosphaerula palustris (strain ATCC BAA-1556 / DSM 19958 / E1-9c) protein is Putative cobalt transport protein CbiM 2.